Here is a 386-residue protein sequence, read N- to C-terminus: Zinc finger protein 385A (386 aa).

The segment at 74-98 adopts a Matrin-type 1 zinc-finger fold; it reads ISCNICQIRFNSQSQAEAHYKGNRH. The segment at 90 to 193 is disordered; that stretch reads EAHYKGNRHA…ASLPGGSKEE (104 aa). Over residues 103-121 the composition is skewed to basic and acidic residues; it reads KGIEAAKTRGREPGVREPG. Residues 145 to 351 form a necessary for binding to ITPR1, CEBPA and p53/TP53 mRNAs region; it reads NGLGPAPGSP…AGSPLSLRPA (207 aa). S185 is subject to Phosphoserine. The Matrin-type 2 zinc-finger motif lies at 201-225; that stretch reads LYCALCKVAVNSLSQLEAHNKGTKH. Residue T248 is modified to Phosphothreonine. The Matrin-type 3 zinc-finger motif lies at 261–285; it reads FHCEICNVKVNSEVQLKQHISSRRH. Residues 279–309 form a disordered region; that stretch reads HISSRRHRDGVAGKPNPLLSRHKKSRGAGEL.

Interacts with ELAVL1; the interaction is indirect, mRNA-dependent and may regulate p53/TP53 expression. Interacts with p53/TP53; the interaction is direct and enhances p53/TP53 transactivation functions on cell-cycle arrest target genes, resulting in growth arrest. Post-translationally, ubiquitinated upon prolonged exposure to genotoxic stress, which leads to proteasomal degradation of ZNF385A and releases p53/TP53 from cell-cycle arrest target gene promoters. In terms of tissue distribution, expressed predominantly in the retina.

The protein localises to the cytoplasm. The protein resides in the nucleus. It is found in the nucleolus. It localises to the cell projection. Its subcellular location is the dendrite. Functionally, RNA-binding protein that affects the localization and the translation of a subset of mRNA. May play a role in adipogenesis through binding to the 3'-UTR of CEBPA mRNA and regulation of its translation. Targets ITPR1 mRNA to dendrites in Purkinje cells, and may regulate its activity-dependent translation. With ELAVL1, binds the 3'-UTR of p53/TP53 mRNAs to control their nuclear export induced by CDKN2A. Hence, may regulate p53/TP53 expression and mediate in part the CDKN2A anti-proliferative activity. May also bind CCNB1 mRNA. Alternatively, may also regulate p53/TP53 activity through direct protein-protein interaction. Interacts with p53/TP53 and promotes cell-cycle arrest over apoptosis enhancing preferentially the DNA binding and transactivation of p53/TP53 on cell-cycle arrest target genes over proapoptotic target genes. May also regulate the ubiquitination and stability of CDKN1A promoting DNA damage-induced cell cycle arrest. Also plays a role in megakaryocytes differentiation. The sequence is that of Zinc finger protein 385A (ZNF385A) from Homo sapiens (Human).